Reading from the N-terminus, the 388-residue chain is Pre-mRNA-splicing factor cwf2 (388 aa).

The interval 43–63 (VKRKKQPARKQIETRPEYEME) is disordered. The segment at 111-138 (NPGSFFCLYFARGMCSEGSKCEYLHRLP) adopts a C3H1-type zinc-finger fold. The 75-residue stretch at 174–248 (YTLYVGGITP…ECLNVRWATT (75 aa)) folds into the RRM domain. The interval 331 to 352 (PNKSQSEEGSNDDHKSVTTTES) is disordered.

It belongs to the RRM CWC2 family. In terms of assembly, belongs to the 40S cdc5-associated complex (or cwf complex), a spliceosome sub-complex reminiscent of a late-stage spliceosome composed of the U2, U5 and U6 snRNAs and at least brr2, cdc5, cwf2/prp3, cwf3/syf1, cwf4/syf3, cwf5/ecm2, spp42/cwf6, cwf7/spf27, cwf8, cwf9, cwf10, cwf11, cwf12, prp45/cwf13, cwf14, cwf15, cwf16, cwf17, cwf18, cwf19, cwf20, cwf21, cwf22, cwf23, cwf24, cwf25, cwf26, cyp7/cwf27, cwf28, cwf29/ist3, lea1, msl1, prp5/cwf1, prp10, prp12/sap130, prp17, prp22, sap61, sap62, sap114, sap145, slu7, smb1, smd1, smd3, smf1, smg1 and syf2.

It localises to the nucleus. Involved in the first step of pre-mRNA splicing. Required for cell growth and cell cycle control. Plays a role in the levels of the U1, U4, U5 and U6 snRNAs and the maintenance of the U4/U6 snRNA complex. May provide the link between the 'nineteen complex' NTC spliceosome protein complex and the spliceosome through the U6 snRNA. Associates predominantly with U6 snRNAs in assembled active spliceosomes. Binds directly to the internal stem-loop (ISL) domain of the U6 snRNA and to the pre-mRNA intron near the 5' splice site during the activation and catalytic phases of the spliceosome cycle. Involved in pre-mRNA splicing. This chain is Pre-mRNA-splicing factor cwf2 (cwf2), found in Schizosaccharomyces pombe (strain 972 / ATCC 24843) (Fission yeast).